We begin with the raw amino-acid sequence, 270 residues long: Cell surface glycoprotein CD200 receptor 5 (270 aa).

The signal sequence occupies residues M1 to C25. Residues T26–T241 are Extracellular-facing. The Ig-like V-type domain maps to P39 to Q145. The N-linked (GlcNAc...) asparagine glycan is linked to N44. Intrachain disulfides connect C59–C129 and C164–C213. The 96-residue stretch at P134 to N229 folds into the Ig-like C2-type domain. 2 N-linked (GlcNAc...) asparagine glycosylation sites follow: N192 and N221. A helical membrane pass occupies residues I242–F262. The Cytoplasmic segment spans residues Q263 to T270.

This sequence belongs to the CD200R family.

The protein resides in the membrane. May not be a receptor for the CD200/OX2 cell surface glycoprotein. The polypeptide is Cell surface glycoprotein CD200 receptor 5 (Cd200r5) (Mus musculus (Mouse)).